A 237-amino-acid polypeptide reads, in one-letter code: Mannose-specific lectin alpha chain (237 aa).

The Mn(2+) site is built by E8 and D10. Ca(2+) is bound by residues D10, Y12, N14, and D19. Y12 lines the a carbohydrate pocket. Positions 19, 24, and 34 each coordinate Mn(2+). Residue 99–100 (LY) coordinates a carbohydrate. D208 is a binding site for Ca(2+). R228 is a binding site for a carbohydrate.

Belongs to the leguminous lectin family. In terms of assembly, homotetramer. The beta and gamma chains are produced by partial proteolytic processing of the lectin alpha chain by an asparaginyl endopeptidase.

Functionally, D-mannose/D-glucose-binding lectin. Also binds derivatives of glucose and mannose such as more complex glycans. The protein is Mannose-specific lectin alpha chain of Cymbosema roseum (Dioclea purpurea).